Reading from the N-terminus, the 141-residue chain is Transcriptional regulator MraZ (141 aa).

SpoVT-AbrB domains follow at residues 5–47 (EFEH…PAER) and 76–119 (AAEC…GAEH).

Belongs to the MraZ family. As to quaternary structure, forms oligomers.

It is found in the cytoplasm. Its subcellular location is the nucleoid. This chain is Transcriptional regulator MraZ, found in Lactiplantibacillus plantarum (strain ATCC BAA-793 / NCIMB 8826 / WCFS1) (Lactobacillus plantarum).